The chain runs to 367 residues: C-X-C chemokine receptor type 3 (367 aa).

Topologically, residues 1-56 (MYLEVSERQVLDASDIAFLLENSTSPYDYGENESDFSDSPPCPQDFSLNFDRTFLP) are extracellular. A glycan (N-linked (GlcNAc...) asparagine) is linked at asparagine 22. 2 positions are modified to sulfotyrosine: tyrosine 27 and tyrosine 29. N-linked (GlcNAc...) asparagine glycosylation is present at asparagine 32. A helical transmembrane segment spans residues 57-77 (VLYSLLFLLGLLGNGAVAAVL). Over 78 to 89 (LSQRTALSSTDT) the chain is Cytoplasmic. The chain crosses the membrane as a helical span at residues 90 to 110 (FLLHLAVADVLLVLTLPLWAV). Topologically, residues 111–125 (DAAAQWVFGSGLCKV) are extracellular. A disulfide bond links cysteine 123 and cysteine 202. A helical transmembrane segment spans residues 126–146 (AGALFNINFYAGAFLLACISF). Residues 147–168 (DRYLSIVHATQIYRRDPWVRVA) lie on the Cytoplasmic side of the membrane. A helical transmembrane segment spans residues 169 to 189 (LTCIVVWGLCVLFALPDFIFL). At 190–222 (SASHDQRLNATHCQYNFPQVGRTALRVLQLVAG) the chain is on the extracellular side. Residue asparagine 198 is glycosylated (N-linked (GlcNAc...) asparagine). A helical membrane pass occupies residues 223–243 (FLMPLLVMAYCYAHILAVLLV). Over 244–255 (SRGQRRFRAMRL) the chain is Cytoplasmic. A helical membrane pass occupies residues 256-276 (VVVVVVAFAVCWTPYHLVVLV). The Extracellular segment spans residues 277-300 (DILMDVGVLARNCGRESHVDVAKS). A helical membrane pass occupies residues 301-321 (VTSGMGYMHCCLNPLLYAFVG). The Cytoplasmic segment spans residues 322–367 (VKFKEQMWMLLMRLGRSDQRGPQRQPSSSRRESSWSETTEASYLGL). Positions 339 to 367 (DQRGPQRQPSSSRRESSWSETTEASYLGL) are disordered.

Belongs to the G-protein coupled receptor 1 family. As to quaternary structure, homomer. Forms heteromers with ACKR4. Interacts with PF4/CXCL4. Post-translationally, sulfation on Tyr-27 and Tyr-29 is essential for CXCL10 binding. In terms of processing, N-glycosylated.

Its subcellular location is the cell membrane. Receptor for the C-X-C chemokine CXCL9, CXCL10 and CXCL11 and mediates the proliferation, survival and angiogenic activity of mesangial cells through a heterotrimeric G-protein signaling pathway. Probably promotes cell chemotaxis response. Binds to CCL21. Upon activation by PF4, induces activated T-lymphocytes migration mediated via downstream Ras/extracellular signal-regulated kinase (ERK) signaling. The polypeptide is C-X-C chemokine receptor type 3 (Cxcr3) (Rattus norvegicus (Rat)).